Here is a 394-residue protein sequence, read N- to C-terminus: Junctional adhesion molecule-like (394 aa).

The N-terminal stretch at Met-1–Gly-19 is a signal peptide. 2 Ig-like V-type domains span residues Leu-20 to Val-132 and Pro-137 to His-250. Topologically, residues Leu-20 to Leu-275 are extracellular. Disulfide bonds link Cys-42/Cys-116 and Cys-155/Cys-234. N-linked (GlcNAc...) asparagine glycosylation is found at Asn-76 and Asn-231. The chain crosses the membrane as a helical span at residues Val-276–Val-296. Over Lys-297 to Phe-394 the chain is Cytoplasmic. A disordered region spans residues Pro-369–Phe-394. The segment covering Arg-372–Ser-383 has biased composition (basic and acidic residues).

Belongs to the immunoglobulin superfamily. In terms of assembly, homodimer; active form in leukocyte-endothelial cell adhesion. Interacts (homodimeric form) with CXADR. Interacts (via cytoplasmic domain) with the PI3 kinase; upon CXADR-binding. Interacts with ITGA4 and ITGB1; integrin alpha-4/beta-1 may regulate leukocyte to endothelial cells adhesion by controlling JAML homodimerization. In terms of tissue distribution, expression is restricted to the hematopoietic tissues with the exception of liver. Expressed in fetal liver, spleen and thymus. Preferentially expressed by mature leukocytes (at protein level).

It localises to the cell membrane. The protein resides in the cell junction. Transmembrane protein of the plasma membrane of leukocytes that control their migration and activation through interaction with CXADR, a plasma membrane receptor found on adjacent epithelial and endothelial cells. The interaction between both receptors mediates the activation of gamma-delta T-cells, a subpopulation of T-cells residing in epithelia and involved in tissue homeostasis and repair. Upon epithelial CXADR-binding, JAML induces downstream cell signaling events in gamma-delta T-cells through PI3-kinase and MAP kinases. It results in proliferation and production of cytokines and growth factors by T-cells that in turn stimulate epithelial tissues repair. It also controls the transmigration of leukocytes within epithelial and endothelial tissues through adhesive interactions with epithelial and endothelial CXADR. This is Junctional adhesion molecule-like from Homo sapiens (Human).